We begin with the raw amino-acid sequence, 401 residues long: Probable cysteine desulfurase (401 aa).

N6-(pyridoxal phosphate)lysine is present on K216.

This sequence belongs to the class-V pyridoxal-phosphate-dependent aminotransferase family. Csd subfamily. The cofactor is pyridoxal 5'-phosphate.

The catalysed reaction is (sulfur carrier)-H + L-cysteine = (sulfur carrier)-SH + L-alanine. The chain is Probable cysteine desulfurase (csd) from Pyrococcus abyssi (strain GE5 / Orsay).